A 225-amino-acid chain; its full sequence is Cytochrome c oxidase subunit 2 (225 aa).

The Mitochondrial intermembrane portion of the chain corresponds to M1–H26. A helical transmembrane segment spans residues S27 to N48. Topologically, residues N49–E62 are mitochondrial matrix. The chain crosses the membrane as a helical span at residues I63–H82. The Mitochondrial intermembrane segment spans residues L83 to S225. 6 residues coordinate Cu cation: H160, C195, E197, C199, H203, and M206. E197 contributes to the Mg(2+) binding site.

It belongs to the cytochrome c oxidase subunit 2 family. Component of the cytochrome c oxidase (complex IV, CIV), a multisubunit enzyme composed of a catalytic core of 3 subunits and several supernumerary subunits. The complex exists as a monomer or a dimer and forms supercomplexes (SCs) in the inner mitochondrial membrane with ubiquinol-cytochrome c oxidoreductase (cytochrome b-c1 complex, complex III, CIII). It depends on Cu cation as a cofactor.

The protein localises to the mitochondrion inner membrane. It catalyses the reaction 4 Fe(II)-[cytochrome c] + O2 + 8 H(+)(in) = 4 Fe(III)-[cytochrome c] + 2 H2O + 4 H(+)(out). Functionally, component of the cytochrome c oxidase, the last enzyme in the mitochondrial electron transport chain which drives oxidative phosphorylation. The respiratory chain contains 3 multisubunit complexes succinate dehydrogenase (complex II, CII), ubiquinol-cytochrome c oxidoreductase (cytochrome b-c1 complex, complex III, CIII) and cytochrome c oxidase (complex IV, CIV), that cooperate to transfer electrons derived from NADH and succinate to molecular oxygen, creating an electrochemical gradient over the inner membrane that drives transmembrane transport and the ATP synthase. Cytochrome c oxidase is the component of the respiratory chain that catalyzes the reduction of oxygen to water. Electrons originating from reduced cytochrome c in the intermembrane space (IMS) are transferred via the dinuclear copper A center (CU(A)) of subunit 2 and heme A of subunit 1 to the active site in subunit 1, a binuclear center (BNC) formed by heme A3 and copper B (CU(B)). The BNC reduces molecular oxygen to 2 water molecules using 4 electrons from cytochrome c in the IMS and 4 protons from the mitochondrial matrix. This Rhipicephalus sanguineus (Brown dog tick) protein is Cytochrome c oxidase subunit 2 (COII).